The primary structure comprises 450 residues: Calcium-binding and coiled-coil domain-containing protein 2 (450 aa).

Residues 133–136 carry the CLIR motif; that stretch reads ILVV. Residues 135–349 are a coiled coil; sequence VVTTQSEVEE…RENNRLLSYM (215 aa). Residues 203–206 carry the LIR-like motif; that stretch reads DCWE. Residues 371–381 form an interaction with LGALS8 region; that stretch reads DPGLVFGNPYS. An interaction with MYO6 region spans residues 395 to 450; sequence KKCPTCKSDFAADVFDHNLALEQHLQTLSLNCPICDKTFPAKEKQIFEDHVFCHTL. The UBZ1-type zinc finger occupies 423 to 448; sequence SLNCPICDKTFPAKEKQIFEDHVFCH. Residues cysteine 426, cysteine 429, histidine 444, and histidine 448 each contribute to the Zn(2+) site.

It belongs to the CALCOCO family. In terms of assembly, dimer. Part of a complex consisting of CALCOCO2, TAX1BP1 and MYO6. Interacts with GEMIN4. Interacts with ATG8 family members MAP1LC3A, MAP1LC3B, GABARAP, GABARAPL1 and GABARAPL2. Interacts with ATG8 family member MAP1LC3C. Interacts with LGALS8. Interacts with TOM1; the interaction is indirect and is mediated by MYO6, which acts as a bridge between TOM1 and CALCOCO2. Interacts with AZI2.

It is found in the cytoplasm. The protein resides in the perinuclear region. The protein localises to the cytoskeleton. Its subcellular location is the cytoplasmic vesicle. It localises to the autophagosome membrane. In terms of biological role, xenophagy-specific receptor required for autophagy-mediated intracellular bacteria degradation. Acts as an effector protein of galectin-sensed membrane damage that restricts the proliferation of infecting pathogens upon entry into the cytosol by targeting LGALS8-associated bacteria for autophagy. Initially orchestrates bacteria targeting to autophagosomes and subsequently ensures pathogen degradation by regulating pathogen-containing autophagosome maturation. Bacteria targeting to autophagosomes relies on its interaction with MAP1LC3A, MAP1LC3B and/or GABARAPL2, whereas regulation of pathogen-containing autophagosome maturation requires the interaction with MAP3LC3C. May play a role in ruffle formation and actin cytoskeleton organization and seems to negatively regulate constitutive secretion. This Bos taurus (Bovine) protein is Calcium-binding and coiled-coil domain-containing protein 2.